Reading from the N-terminus, the 110-residue chain is U1-lycotoxin-Ls1dd (110 aa).

The signal sequence occupies residues 1 to 20 (MKFVLLFGVLLVTLFSYSSA). A propeptide spanning residues 21 to 44 (EMLDDFDQADEDELLSLIEKEEAR) is cleaved from the precursor. Cystine bridges form between cysteine 47–cysteine 62, cysteine 54–cysteine 71, cysteine 61–cysteine 89, and cysteine 73–cysteine 87.

The protein belongs to the neurotoxin 19 (CSTX) family. 03 subfamily. As to expression, expressed by the venom gland.

The protein resides in the secreted. The chain is U1-lycotoxin-Ls1dd from Lycosa singoriensis (Wolf spider).